Reading from the N-terminus, the 304-residue chain is Recombination-associated protein RdgC (304 aa).

It belongs to the RdgC family.

It localises to the cytoplasm. The protein resides in the nucleoid. Its function is as follows. May be involved in recombination. This chain is Recombination-associated protein RdgC, found in Shewanella sp. (strain W3-18-1).